The primary structure comprises 220 residues: Redox-sensing transcriptional repressor Rex (220 aa).

The segment at residues 17–56 is a DNA-binding region (H-T-H motif); sequence LYARSLRYLLQEGVESVSSQELGDRINVTAAQIRKDLSYF. NAD(+) is bound at residue 91-96; that stretch reads GIGHLG.

The protein belongs to the transcriptional regulatory Rex family. Homodimer.

Its subcellular location is the cytoplasm. Its function is as follows. Modulates transcription in response to changes in cellular NADH/NAD(+) redox state. This is Redox-sensing transcriptional repressor Rex from Roseiflexus sp. (strain RS-1).